Reading from the N-terminus, the 655-residue chain is p-hydroxybenzoic acid efflux pump subunit AaeB (655 aa).

Helical transmembrane passes span 13 to 33 (FAVK…HFQL), 38 to 58 (WAVL…GGEP), 69 to 89 (LRII…ITMI), 93 to 113 (LLMI…SSLV), 121 to 141 (WGLS…EPLL), 152 to 172 (EIVI…PRSV), 370 to 390 (LFWL…IAVV), 407 to 427 (FIYG…VIIP), 431 to 451 (QSML…GIEV), 459 to 479 (MGAL…TFHF), and 482 to 502 (FLDS…VILL).

Belongs to the aromatic acid exporter ArAE (TC 2.A.85) family.

The protein localises to the cell inner membrane. In terms of biological role, forms an efflux pump with AaeA. Could function as a metabolic relief valve, allowing to eliminate certain compounds when they accumulate to high levels in the cell. The chain is p-hydroxybenzoic acid efflux pump subunit AaeB from Citrobacter koseri (strain ATCC BAA-895 / CDC 4225-83 / SGSC4696).